We begin with the raw amino-acid sequence, 86 residues long: High affinity immunoglobulin epsilon receptor subunit gamma (86 aa).

Residues 1 to 18 form the signal peptide; sequence MIPAVVLLLLLLVEQAAA. Over 19–23 the chain is Extracellular; it reads LGEPQ. A helical membrane pass occupies residues 24–44; the sequence is LCYILDAILFLYGIVLTLLYC. Residues 45-86 lie on the Cytoplasmic side of the membrane; the sequence is RLKIQVRKAAIASYEKSDGVYTGLSTRNQETYETLKHEKPPQ. Positions 54–82 constitute an ITAM domain; that stretch reads AIASYEKSDGVYTGLSTRNQETYETLKHE. Tyrosine 65 bears the Phosphotyrosine mark. At serine 69 the chain carries Phosphoserine. Tyrosine 76 is modified (phosphotyrosine). Residue threonine 78 is modified to Phosphothreonine.

The protein belongs to the CD3Z/FCER1G family. IgE Fc receptor is a tetramer of an alpha chain, a beta chain, and two disulfide linked gamma chains. Associates with FCGR1A; forms a functional signaling complex. The signaling subunit of immunoglobulin gamma (IgG) Fc receptor complex. As a homodimer or a heterodimer of CD247 and FCER1G, associates with the ligand binding subunit FCGR3A to form a functional receptor complex. Associates with CLEC6A. Interacts with CLEC4E. Interacts (via ITAM domain) with SYK (via SH2 domains); activates SYK, enabling integrin-mediated activation of neutrophils and macrophages. Interacts with CSF2RB and recruits SYK in response to IL3 stimulation; this interaction is direct. Interacts with CD300LH; the interaction may be indirect. Interacts with CD300LD. Interacts with TARM1.

The protein resides in the cell membrane. Its function is as follows. Adapter protein containing an immunoreceptor tyrosine-based activation motif (ITAM) that transduces activation signals from various immunoreceptors. As a component of the high-affinity immunoglobulin E (IgE) receptor, mediates allergic inflammatory signaling in mast cells. As a constitutive component of interleukin-3 receptor complex, selectively mediates interleukin 4/IL4 production by basophils priming T-cells toward effector T-helper 2 subset. Associates with pattern recognition receptors CLEC4D and CLEC4E to form a functional signaling complex in myeloid cells. Binding of mycobacterial trehalose 6,6'-dimycolate (TDM) to this receptor complex leads to phosphorylation of ITAM, triggering activation of SYK, CARD9 and NF-kappa-B, consequently driving maturation of antigen-presenting cells and shaping antigen-specific priming of T-cells toward effector T-helper 1 and T-helper 17 cell subtypes. May function cooperatively with other activating receptors. Functionally linked to integrin beta-2/ITGB2-mediated neutrophil activation. Also involved in integrin alpha-2/ITGA2-mediated platelet activation. This Macaca fascicularis (Crab-eating macaque) protein is High affinity immunoglobulin epsilon receptor subunit gamma (FCER1G).